The following is a 441-amino-acid chain: Serine carboxypeptidase-like 1 (441 aa).

Residues 1-29 form the signal peptide; sequence MANKYVSSVLKSLLVLLHLVFLSKQHVDS. 3 disulfides stabilise this stretch: Cys-88/Cys-331, Cys-252/Cys-266, and Cys-290/Cys-297. A glycan (N-linked (GlcNAc...) asparagine) is linked at Asn-109. The active site involves Ser-184. The N-linked (GlcNAc...) asparagine glycan is linked to Asn-350. Asp-366 is an active-site residue. An N-linked (GlcNAc...) asparagine glycan is attached at Asn-382. The active site involves His-419.

Belongs to the peptidase S10 family. In terms of tissue distribution, expressed in seedlings and roots.

The protein localises to the secreted. In terms of biological role, probable carboxypeptidase. In Arabidopsis thaliana (Mouse-ear cress), this protein is Serine carboxypeptidase-like 1 (SCPL1).